We begin with the raw amino-acid sequence, 1285 residues long: Period circadian protein homolog 1 (1285 aa).

The segment at 1 to 134 (MSGPLEGADG…SSEQSARART (134 aa)) is disordered. The interval 1–151 (MSGPLEGADG…LRELKLRLPP (151 aa)) is interaction with BTRC. Composition is skewed to low complexity over residues 48-57 (NSNGSSGNES) and 64-115 (GASQ…ASSE). The segment covering 116-132 (QDNPSTSGCSSEQSARA) has biased composition (polar residues). Phosphothreonine; by CSNK1E is present on Thr-121. Phosphoserine; by CSNK1E occurs at positions 122 and 126. Positions 138–147 (LMTALRELKL) match the Nuclear export signal 1 motif. PAS domains follow at residues 208 to 275 (ITSE…PFRL) and 348 to 414 (YEAP…KILQ). The PAC domain maps to 422–465 (HSPIRFCARNGEYVTMDTSWAGFVHPWSRKVAFVLGRHKVRTAP). Positions 489–498 (LSEQIHRLLL) match the Nuclear export signal 2 motif. 2 disordered regions span residues 503–544 (SSSP…PAPV) and 643–694 (TKRK…KEPV). Low complexity-rich tracts occupy residues 523-533 (SPGSSSDSNGG) and 648-658 (ASSSSCTASSA). The segment at 592 to 811 (ELEVVPMPNQ…GLDSSSATPS (220 aa)) is required for phosphorylation by CSNK1E. Phosphoserine occurs at positions 657, 659, 700, and 811. 2 disordered regions span residues 802–867 (GLDS…PPST) and 931–1030 (LSQA…DALS). Positions 820–836 (VPPGRRHHCRSKAKRSR) match the Nuclear localization signal motif. The segment covering 823-840 (GRRHHCRSKAKRSRHHHT) has biased composition (basic residues). The segment covering 853–867 (SPVPPSGPWPPPPST) has biased composition (pro residues). A compositionally biased stretch (low complexity) spans 943-954 (ASHSPSPSLTPL). Polar residues predominate over residues 967–979 (FNSRCSSPLQLNL). Phosphoserine occurs at positions 972 and 973. Positions 975–982 (LQLNLLQL) match the Nuclear export signal 3 motif. Positions 1036 to 1040 (LELLL) match the LXXLL motif. The span at 1045 to 1055 (RSGTGSAASGS) shows a compositional bias: low complexity. Disordered regions lie at residues 1045–1091 (RSGT…SKYF) and 1202–1285 (IQDP…NSTS). Residues 1056–1070 (LGSGLGSGSGSGSHE) are compositionally biased toward gly residues. Residues 1071–1088 (GGSTSASITRSSQSSHTS) are compositionally biased toward low complexity. The interval 1142–1285 (SRDRASVLKQ…ALPAEENSTS (144 aa)) is CRY binding domain. A compositionally biased stretch (gly residues) spans 1229–1241 (GEGGGGGGGGGEG). Residues 1269 to 1285 (GGSSSSPALPAEENSTS) are compositionally biased toward polar residues.

In terms of assembly, homodimer. Component of the circadian core oscillator, which includes the CRY proteins, CLOCK or NPAS2, BMAL1 or BMAL2, CSNK1D and/or CSNK1E, TIMELESS, and the PER proteins. Interacts directly with TIMELESS, PER2, PER3, CRY1 and CRY2. Interacts with BMAL1 and CLOCK. Interacts with GPRASP1. Interacts (phosphorylated) with BTRC and FBXW11; the interactions trigger proteasomal degradation. Interacts with NONO, WDR5 and SFPQ. Interacts with USP2. Interacts with HNF4A. Post-translationally, phosphorylated on serine residues by CSNK1D, CSNK1E and probably also by CSNK1G2. Phosphorylation by CSNK1D or CSNK1E promotes nuclear location of PER proteins as well as ubiquitination and subsequent degradation. May be dephosphorylated by PP1. In terms of processing, ubiquitinated; requires phosphorylation by CSNK1E and interaction with BTRC and FBXW11. Deubiquitinated by USP2. Expressed in the brain, mainly in the suprachiasmatic nucleus (SCN). Expression also found in the harderian gland, lung, eye, intestine, liver and skeletal muscle.

The protein resides in the nucleus. It is found in the cytoplasm. In terms of biological role, transcriptional repressor which forms a core component of the circadian clock. The circadian clock, an internal time-keeping system, regulates various physiological processes through the generation of approximately 24 hour circadian rhythms in gene expression, which are translated into rhythms in metabolism and behavior. It is derived from the Latin roots 'circa' (about) and 'diem' (day) and acts as an important regulator of a wide array of physiological functions including metabolism, sleep, body temperature, blood pressure, endocrine, immune, cardiovascular, and renal function. Consists of two major components: the central clock, residing in the suprachiasmatic nucleus (SCN) of the brain, and the peripheral clocks that are present in nearly every tissue and organ system. Both the central and peripheral clocks can be reset by environmental cues, also known as Zeitgebers (German for 'timegivers'). The predominant Zeitgeber for the central clock is light, which is sensed by retina and signals directly to the SCN. The central clock entrains the peripheral clocks through neuronal and hormonal signals, body temperature and feeding-related cues, aligning all clocks with the external light/dark cycle. Circadian rhythms allow an organism to achieve temporal homeostasis with its environment at the molecular level by regulating gene expression to create a peak of protein expression once every 24 hours to control when a particular physiological process is most active with respect to the solar day. Transcription and translation of core clock components (CLOCK, NPAS2, BMAL1, BMAL2, PER1, PER2, PER3, CRY1 and CRY2) plays a critical role in rhythm generation, whereas delays imposed by post-translational modifications (PTMs) are important for determining the period (tau) of the rhythms (tau refers to the period of a rhythm and is the length, in time, of one complete cycle). A diurnal rhythm is synchronized with the day/night cycle, while the ultradian and infradian rhythms have a period shorter and longer than 24 hours, respectively. Disruptions in the circadian rhythms contribute to the pathology of cardiovascular diseases, cancer, metabolic syndromes and aging. A transcription/translation feedback loop (TTFL) forms the core of the molecular circadian clock mechanism. Transcription factors, CLOCK or NPAS2 and BMAL1 or BMAL2, form the positive limb of the feedback loop, act in the form of a heterodimer and activate the transcription of core clock genes and clock-controlled genes (involved in key metabolic processes), harboring E-box elements (5'-CACGTG-3') within their promoters. The core clock genes: PER1/2/3 and CRY1/2 which are transcriptional repressors form the negative limb of the feedback loop and interact with the CLOCK|NPAS2-BMAL1|BMAL2 heterodimer inhibiting its activity and thereby negatively regulating their own expression. This heterodimer also activates nuclear receptors NR1D1/2 and RORA/B/G, which form a second feedback loop and which activate and repress BMAL1 transcription, respectively. Regulates circadian target genes expression at post-transcriptional levels, but may not be required for the repression at transcriptional level. Controls PER2 protein decay. Represses CRY2 preventing its repression on CLOCK/BMAL1 target genes such as FXYD5 and SCNN1A in kidney and PPARA in liver. Besides its involvement in the maintenance of the circadian clock, has an important function in the regulation of several processes. Participates in the repression of glucocorticoid receptor NR3C1/GR-induced transcriptional activity by reducing the association of NR3C1/GR to glucocorticoid response elements (GREs) by BMAL1:CLOCK. Plays a role in the modulation of the neuroinflammatory state via the regulation of inflammatory mediators release, such as CCL2 and IL6. In spinal astrocytes, negatively regulates the MAPK14/p38 and MAPK8/JNK MAPK cascades as well as the subsequent activation of NFkappaB. Coordinately regulates the expression of multiple genes that are involved in the regulation of renal sodium reabsorption. Can act as gene expression activator in a gene and tissue specific manner, in kidney enhances WNK1 and SLC12A3 expression in collaboration with CLOCK. Modulates hair follicle cycling. Represses the CLOCK-BMAL1 induced transcription of BHLHE40/DEC1. This chain is Period circadian protein homolog 1 (PER1), found in Spalax judaei (Judean Mountains blind mole rat).